The primary structure comprises 568 residues: Sphingosine-1-phosphate lyase 1 (568 aa).

Topologically, residues 1–41 (MPSTDLLKLKDFEPYLEILEAYSTKAKNYVNGYCTKYEPWQ) are lumenal. Residues 42-62 (LIAGSVLCTLLVVWVYELIFQ) traverse the membrane as a helical; Signal-anchor for type III membrane protein segment. Over 63 to 568 (PESLWSRFKN…NQMNGSPKPR (506 aa)) the chain is Cytoplasmic. The residue at position 353 (Lys-353) is an N6-(pyridoxal phosphate)lysine; alternate. At Lys-353 the chain carries N6-acetyllysine; alternate. Tyr-356 and Tyr-366 each carry 3'-nitrotyrosine. Residue Ser-564 is modified to Phosphoserine.

The protein belongs to the group II decarboxylase family. Sphingosine-1-phosphate lyase subfamily. In terms of assembly, homodimer. Requires pyridoxal 5'-phosphate as cofactor.

It localises to the endoplasmic reticulum membrane. The enzyme catalyses sphinganine 1-phosphate = hexadecanal + phosphoethanolamine. It carries out the reaction sphing-4-enine 1-phosphate = (2E)-hexadecenal + phosphoethanolamine. The protein operates within lipid metabolism; sphingolipid metabolism. In terms of biological role, cleaves phosphorylated sphingoid bases (PSBs), such as sphingosine-1-phosphate, into fatty aldehydes and phosphoethanolamine. Elevates stress-induced ceramide production and apoptosis. Required for global lipid homeostasis in liver and cholesterol homeostasis in fibroblasts. Involved in the regulation of pro-inflammatory response and neutrophil trafficking. Modulates neuronal autophagy via phosphoethanolamine production which regulates accumulation of aggregate-prone proteins such as APP. Seems to play a role in establishing neuronal contact sites and axonal maintenance. The protein is Sphingosine-1-phosphate lyase 1 of Rattus norvegicus (Rat).